Reading from the N-terminus, the 431-residue chain is Glutamate-1-semialdehyde 2,1-aminomutase (431 aa).

N6-(pyridoxal phosphate)lysine is present on K269.

Belongs to the class-III pyridoxal-phosphate-dependent aminotransferase family. HemL subfamily. In terms of assembly, homodimer. It depends on pyridoxal 5'-phosphate as a cofactor.

Its subcellular location is the cytoplasm. The catalysed reaction is (S)-4-amino-5-oxopentanoate = 5-aminolevulinate. It functions in the pathway porphyrin-containing compound metabolism; protoporphyrin-IX biosynthesis; 5-aminolevulinate from L-glutamyl-tRNA(Glu): step 2/2. This Francisella tularensis subsp. holarctica (strain LVS) protein is Glutamate-1-semialdehyde 2,1-aminomutase.